Consider the following 223-residue polypeptide: Small ribosomal subunit protein uS3 (223 aa).

One can recognise a KH type-2 domain in the interval 40–108 (IRELVHRELP…KVHLNIQEIR (69 aa)).

It belongs to the universal ribosomal protein uS3 family. In terms of assembly, part of the 30S ribosomal subunit. Forms a tight complex with proteins S10 and S14.

Its function is as follows. Binds the lower part of the 30S subunit head. Binds mRNA in the 70S ribosome, positioning it for translation. This Thermomicrobium roseum (strain ATCC 27502 / DSM 5159 / P-2) protein is Small ribosomal subunit protein uS3.